We begin with the raw amino-acid sequence, 123 residues long: Large ribosomal subunit protein bL19 (123 aa).

Belongs to the bacterial ribosomal protein bL19 family.

This protein is located at the 30S-50S ribosomal subunit interface and may play a role in the structure and function of the aminoacyl-tRNA binding site. The protein is Large ribosomal subunit protein bL19 of Laribacter hongkongensis (strain HLHK9).